A 737-amino-acid chain; its full sequence is Polyribonucleotide nucleotidyltransferase (737 aa).

Residues aspartate 489 and aspartate 495 each coordinate Mg(2+). Residues 556-615 enclose the KH domain; sequence PKIDTIKIDVDKIKIVIGKGGETIDKIIAETGVKIDIDEEGNVSIYSSDQDAINRAKEII. An S1 motif domain is found at 625–693; the sequence is DEVYRAKVVR…EKGRIDASMK (69 aa). The interval 691 to 737 is disordered; the sequence is SMKALLPRPPKPEHDEKGEKSERPHRPRHHKDHKPKKEFTETPKDSE. A compositionally biased stretch (basic and acidic residues) spans 700-714; that stretch reads PKPEHDEKGEKSERP. A compositionally biased stretch (basic residues) spans 715–724; sequence HRPRHHKDHK. Over residues 725–737 the composition is skewed to basic and acidic residues; the sequence is PKKEFTETPKDSE.

This sequence belongs to the polyribonucleotide nucleotidyltransferase family. Requires Mg(2+) as cofactor.

The protein resides in the cytoplasm. It carries out the reaction RNA(n+1) + phosphate = RNA(n) + a ribonucleoside 5'-diphosphate. Involved in mRNA degradation. Catalyzes the phosphorolysis of single-stranded polyribonucleotides processively in the 3'- to 5'-direction. This chain is Polyribonucleotide nucleotidyltransferase, found in Streptococcus pneumoniae serotype 19F (strain G54).